A 470-amino-acid polypeptide reads, in one-letter code: Chitin deacetylase 1 (470 aa).

Positions 1-19 (MFTFAAFSALLISLAGVVA) are cleaved as a signal peptide. N-linked (GlcNAc...) asparagine glycosylation is found at Asn101 and Asn121. A disulfide bond links Cys155 and Cys363. One can recognise a NodB homology domain in the interval 159–358 (NVWGLSYDDG…VLANGTYQLK (200 aa)). The Proton acceptor role is filled by Asp166. An acetate-binding site is contributed by Asp166. Residues Asp167, His216, and His220 each contribute to the Co(2+) site. Tyr257 is an acetate binding site. Residue His331 is the Proton donor of the active site. 3 N-linked (GlcNAc...) asparagine glycosylation sites follow: Asn352, Asn378, and Asn440. The interval 406 to 447 (EVSAPSEATGSTAAGSAASTTSGSGASASTGAASNTSSSGSG) is disordered. The segment covering 408–447 (SAPSEATGSTAAGSAASTTSGSGASASTGAASNTSSSGSG) has biased composition (low complexity). Residue Ser444 is the site of GPI-anchor amidated serine attachment. A propeptide spans 445–470 (GSGRSATMGGALIALAAVAVGMVYVA) (removed in mature form).

Belongs to the polysaccharide deacetylase family. Requires Co(2+) as cofactor.

The protein localises to the secreted. Its subcellular location is the cell wall. The protein resides in the cell membrane. It carries out the reaction [(1-&gt;4)-N-acetyl-beta-D-glucosaminyl](n) + n H2O = chitosan + n acetate. Hydrolyzes the N-acetamido groups of N-acetyl-D-glucosamine residues in chitin to form chitosan and acetate. Chitosan is required to anchor melanin to the cell wall, for maintenance of cell wall integrity, and for proper cytokinesis. Plays a major role in synthesizing cell wall chitosan during host infection; chitosan offers an advantage during infection as it is less readily detected than chitin by host immunosurveillance mechanisms. The protein is Chitin deacetylase 1 of Cryptococcus neoformans var. grubii serotype A (strain H99 / ATCC 208821 / CBS 10515 / FGSC 9487) (Filobasidiella neoformans var. grubii).